We begin with the raw amino-acid sequence, 447 residues long: ATP-dependent protease ATPase subunit HslU (447 aa).

ATP contacts are provided by residues Ile-18, 60–65, Asp-259, Glu-325, and Arg-397; that span reads GVGKTE.

It belongs to the ClpX chaperone family. HslU subfamily. In terms of assembly, a double ring-shaped homohexamer of HslV is capped on each side by a ring-shaped HslU homohexamer. The assembly of the HslU/HslV complex is dependent on binding of ATP.

Its subcellular location is the cytoplasm. Functionally, ATPase subunit of a proteasome-like degradation complex; this subunit has chaperone activity. The binding of ATP and its subsequent hydrolysis by HslU are essential for unfolding of protein substrates subsequently hydrolyzed by HslV. HslU recognizes the N-terminal part of its protein substrates and unfolds these before they are guided to HslV for hydrolysis. The polypeptide is ATP-dependent protease ATPase subunit HslU (Burkholderia thailandensis (strain ATCC 700388 / DSM 13276 / CCUG 48851 / CIP 106301 / E264)).